A 302-amino-acid polypeptide reads, in one-letter code: Rhomboid-related protein 2 (302 aa).

A disordered region spans residues Met1–Phe38. Residues Met16–Phe38 are compositionally biased toward basic and acidic residues. Transmembrane regions (helical) follow at residues Pro71–Trp91, Leu127–Ile147, Val158–Pro178, Leu182–Val202, Phe211–Leu231, Val244–Phe264, and Phe277–Phe297. Ser186 acts as the Nucleophile in catalysis. His249 is an active-site residue.

The protein belongs to the peptidase S54 family. Post-translationally, proteolytic processing of the proenzyme produces an N- and a C-terminal fragment. The processing is required for activation of the protease.

It is found in the cell membrane. The enzyme catalyses Cleaves type-1 transmembrane domains using a catalytic dyad composed of serine and histidine that are contributed by different transmembrane domains.. In terms of biological role, involved in regulated intramembrane proteolysis and the subsequent release of functional polypeptides from their membrane anchors. Known substrate: EFNB3. The protein is Rhomboid-related protein 2 (Rhbdl2) of Mus musculus (Mouse).